The chain runs to 164 residues: MNLKVGIAVLIIALIVPSAQPYIYRGYDRSSDPNFDMFGRSVAGDNAYRQPLRTLQSPAPMVPRAMPLQRQMYVPPRAPMIAPRVPIRAPMSPVRPGVLQTQPVMPIPYHHPHYYPGYDPPSYDPPDISQPDPPGEYFYHPRPRPNLGIYNPSRITAFNRAYLR.

The first 21 residues, 1 to 21 (MNLKVGIAVLIIALIVPSAQP), serve as a signal peptide directing secretion.

Component of the acid-soluble organic matrix of calcified layers of the shell (at protein level).

The protein resides in the secreted. This chain is Proline-rich protein 2, found in Lottia gigantea (Giant owl limpet).